Here is a 350-residue protein sequence, read N- to C-terminus: Phosphate acyltransferase (350 aa).

The protein belongs to the PlsX family. Homodimer. Probably interacts with PlsY.

The protein resides in the cytoplasm. It carries out the reaction a fatty acyl-[ACP] + phosphate = an acyl phosphate + holo-[ACP]. The protein operates within lipid metabolism; phospholipid metabolism. Catalyzes the reversible formation of acyl-phosphate (acyl-PO(4)) from acyl-[acyl-carrier-protein] (acyl-ACP). This enzyme utilizes acyl-ACP as fatty acyl donor, but not acyl-CoA. The sequence is that of Phosphate acyltransferase from Magnetococcus marinus (strain ATCC BAA-1437 / JCM 17883 / MC-1).